A 468-amino-acid chain; its full sequence is 3-isopropylmalate dehydratase large subunit (468 aa).

Residues Cys-346, Cys-406, and Cys-409 each contribute to the [4Fe-4S] cluster site.

This sequence belongs to the aconitase/IPM isomerase family. LeuC type 1 subfamily. In terms of assembly, heterodimer of LeuC and LeuD. [4Fe-4S] cluster serves as cofactor.

The enzyme catalyses (2R,3S)-3-isopropylmalate = (2S)-2-isopropylmalate. It functions in the pathway amino-acid biosynthesis; L-leucine biosynthesis; L-leucine from 3-methyl-2-oxobutanoate: step 2/4. Catalyzes the isomerization between 2-isopropylmalate and 3-isopropylmalate, via the formation of 2-isopropylmaleate. This is 3-isopropylmalate dehydratase large subunit from Pseudoalteromonas atlantica (strain T6c / ATCC BAA-1087).